The sequence spans 418 residues: Gamma-glutamyl phosphate reductase (418 aa).

It belongs to the gamma-glutamyl phosphate reductase family.

It localises to the cytoplasm. The enzyme catalyses L-glutamate 5-semialdehyde + phosphate + NADP(+) = L-glutamyl 5-phosphate + NADPH + H(+). The protein operates within amino-acid biosynthesis; L-proline biosynthesis; L-glutamate 5-semialdehyde from L-glutamate: step 2/2. In terms of biological role, catalyzes the NADPH-dependent reduction of L-glutamate 5-phosphate into L-glutamate 5-semialdehyde and phosphate. The product spontaneously undergoes cyclization to form 1-pyrroline-5-carboxylate. The protein is Gamma-glutamyl phosphate reductase of Syntrophotalea carbinolica (strain DSM 2380 / NBRC 103641 / GraBd1) (Pelobacter carbinolicus).